The following is a 294-amino-acid chain: Phosphatidylserine decarboxylase proenzyme (294 aa).

Active-site charge relay system; for autoendoproteolytic cleavage activity residues include Asp-88, His-145, and Ser-248. Ser-248 functions as the Schiff-base intermediate with substrate; via pyruvic acid; for decarboxylase activity in the catalytic mechanism. Ser-248 carries the pyruvic acid (Ser); by autocatalysis modification.

The protein belongs to the phosphatidylserine decarboxylase family. PSD-B subfamily. Prokaryotic type I sub-subfamily. In terms of assembly, heterodimer of a large membrane-associated beta subunit and a small pyruvoyl-containing alpha subunit. Pyruvate is required as a cofactor. Post-translationally, is synthesized initially as an inactive proenzyme. Formation of the active enzyme involves a self-maturation process in which the active site pyruvoyl group is generated from an internal serine residue via an autocatalytic post-translational modification. Two non-identical subunits are generated from the proenzyme in this reaction, and the pyruvate is formed at the N-terminus of the alpha chain, which is derived from the carboxyl end of the proenzyme. The autoendoproteolytic cleavage occurs by a canonical serine protease mechanism, in which the side chain hydroxyl group of the serine supplies its oxygen atom to form the C-terminus of the beta chain, while the remainder of the serine residue undergoes an oxidative deamination to produce ammonia and the pyruvoyl prosthetic group on the alpha chain. During this reaction, the Ser that is part of the protease active site of the proenzyme becomes the pyruvoyl prosthetic group, which constitutes an essential element of the active site of the mature decarboxylase.

It localises to the cell membrane. The catalysed reaction is a 1,2-diacyl-sn-glycero-3-phospho-L-serine + H(+) = a 1,2-diacyl-sn-glycero-3-phosphoethanolamine + CO2. Its pathway is phospholipid metabolism; phosphatidylethanolamine biosynthesis; phosphatidylethanolamine from CDP-diacylglycerol: step 2/2. Catalyzes the formation of phosphatidylethanolamine (PtdEtn) from phosphatidylserine (PtdSer). This chain is Phosphatidylserine decarboxylase proenzyme, found in Herminiimonas arsenicoxydans.